The primary structure comprises 314 residues: Protoheme IX farnesyltransferase 2 (314 aa).

9 consecutive transmembrane segments (helical) span residues 32–49 (VMSL…AAPV), 54–76 (LLAV…LNMW), 98–118 (IQPH…VMTL), 120–140 (VLVN…YAVV), 153–173 (IVIG…AVTG), 180–200 (IVLF…LALF), 226–246 (IFAY…LGYT), 249–269 (FYGV…WKVL), and 285–305 (FAYS…DSVV).

The protein belongs to the UbiA prenyltransferase family. Protoheme IX farnesyltransferase subfamily.

Its subcellular location is the cell inner membrane. The catalysed reaction is heme b + (2E,6E)-farnesyl diphosphate + H2O = Fe(II)-heme o + diphosphate. It participates in porphyrin-containing compound metabolism; heme O biosynthesis; heme O from protoheme: step 1/1. Functionally, converts heme B (protoheme IX) to heme O by substitution of the vinyl group on carbon 2 of heme B porphyrin ring with a hydroxyethyl farnesyl side group. This Mesorhizobium japonicum (strain LMG 29417 / CECT 9101 / MAFF 303099) (Mesorhizobium loti (strain MAFF 303099)) protein is Protoheme IX farnesyltransferase 2.